The primary structure comprises 1703 residues: Ferlin 2 (1703 aa).

C2 domains are found at residues 18–141 (IRKL…KTWL) and 207–332 (KQPV…FRWF). 3 disordered regions span residues 913–937 (NQFNDDDEGDNEDEQDSRENDFDDN), 970–1025 (NLDK…TSST), and 1194–1228 (KNKSNRSSMSLSMRSSIQSNTFKSSRKTSRSQKLG). A compositionally biased stretch (acidic residues) spans 916–928 (NDDDEGDNEDEQD). Residues 979–991 (QPQSLKNLQNLDS) show a composition bias toward polar residues. The span at 993–1009 (SKADQKSQFDLKSESKS) shows a compositional bias: basic and acidic residues. Over residues 1198 to 1209 (NRSSMSLSMRSS) the composition is skewed to low complexity. Residues 1466–1595 (VARIIPPSTI…LKKLKEGIVF (130 aa)) form the C2 3 domain. The interval 1628 to 1651 (AAESDPVGEGQNEPNKDPILEKPK) is disordered. Residues 1641 to 1651 (PNKDPILEKPK) show a composition bias toward basic and acidic residues. The helical transmembrane segment at 1681-1701 (FAGIFVSIVTMMILFVKPGIL) threads the bilayer.

This sequence belongs to the ferlin family.

The protein resides in the membrane. Functionally, regulates mucocyst exocytosis. This chain is Ferlin 2, found in Tetrahymena thermophila (strain SB210).